Here is a 362-residue protein sequence, read N- to C-terminus: 3-dehydroquinate synthase (362 aa).

Residues 71 to 76 (DGEQYK), 105 to 109 (GVIGD), 129 to 130 (TT), Lys-142, Lys-151, and 169 to 172 (CLST) each bind NAD(+). 3 residues coordinate Zn(2+): Glu-184, His-247, and His-264.

The protein belongs to the sugar phosphate cyclases superfamily. Dehydroquinate synthase family. It depends on Co(2+) as a cofactor. Requires Zn(2+) as cofactor. NAD(+) serves as cofactor.

The protein resides in the cytoplasm. It catalyses the reaction 7-phospho-2-dehydro-3-deoxy-D-arabino-heptonate = 3-dehydroquinate + phosphate. It participates in metabolic intermediate biosynthesis; chorismate biosynthesis; chorismate from D-erythrose 4-phosphate and phosphoenolpyruvate: step 2/7. Its function is as follows. Catalyzes the conversion of 3-deoxy-D-arabino-heptulosonate 7-phosphate (DAHP) to dehydroquinate (DHQ). The protein is 3-dehydroquinate synthase of Vibrio atlanticus (strain LGP32) (Vibrio splendidus (strain Mel32)).